The primary structure comprises 152 residues: D-aminoacyl-tRNA deacylase (152 aa).

Positions 137-138 (GP) match the Gly-cisPro motif, important for rejection of L-amino acids motif.

This sequence belongs to the DTD family. As to quaternary structure, homodimer.

The protein localises to the cytoplasm. The enzyme catalyses glycyl-tRNA(Ala) + H2O = tRNA(Ala) + glycine + H(+). It catalyses the reaction a D-aminoacyl-tRNA + H2O = a tRNA + a D-alpha-amino acid + H(+). Its function is as follows. An aminoacyl-tRNA editing enzyme that deacylates mischarged D-aminoacyl-tRNAs. Also deacylates mischarged glycyl-tRNA(Ala), protecting cells against glycine mischarging by AlaRS. Acts via tRNA-based rather than protein-based catalysis; rejects L-amino acids rather than detecting D-amino acids in the active site. By recycling D-aminoacyl-tRNA to D-amino acids and free tRNA molecules, this enzyme counteracts the toxicity associated with the formation of D-aminoacyl-tRNA entities in vivo and helps enforce protein L-homochirality. The protein is D-aminoacyl-tRNA deacylase of Geobacter sulfurreducens (strain ATCC 51573 / DSM 12127 / PCA).